Consider the following 545-residue polypeptide: CTP synthase (545 aa).

The interval 1 to 266 is amidoligase domain; sequence MTTKYIFVTG…DEICVKRFGL (266 aa). Ser14 is a CTP binding site. Ser14 serves as a coordination point for UTP. ATP is bound by residues 15-20 and Asp72; that span reads SLGKGI. 2 residues coordinate Mg(2+): Asp72 and Glu140. Residues 147–149, 187–192, and Lys223 contribute to the CTP site; these read DIE and KTKPTQ. Residues 187 to 192 and Lys223 each bind UTP; that span reads KTKPTQ. 239 to 241 provides a ligand contact to ATP; sequence RDV. The Glutamine amidotransferase type-1 domain occupies 291–542; that stretch reads IIGMVGKYTE…IKSAIDHQQG (252 aa). L-glutamine is bound at residue Gly352. Cys379 serves as the catalytic Nucleophile; for glutamine hydrolysis. L-glutamine contacts are provided by residues 380–383, Glu403, and Arg470; that span reads LGMQ. Catalysis depends on residues His515 and Glu517.

It belongs to the CTP synthase family. In terms of assembly, homotetramer.

It catalyses the reaction UTP + L-glutamine + ATP + H2O = CTP + L-glutamate + ADP + phosphate + 2 H(+). It carries out the reaction L-glutamine + H2O = L-glutamate + NH4(+). The catalysed reaction is UTP + NH4(+) + ATP = CTP + ADP + phosphate + 2 H(+). Its pathway is pyrimidine metabolism; CTP biosynthesis via de novo pathway; CTP from UDP: step 2/2. Its activity is regulated as follows. Allosterically activated by GTP, when glutamine is the substrate; GTP has no effect on the reaction when ammonia is the substrate. The allosteric effector GTP functions by stabilizing the protein conformation that binds the tetrahedral intermediate(s) formed during glutamine hydrolysis. Inhibited by the product CTP, via allosteric rather than competitive inhibition. Its function is as follows. Catalyzes the ATP-dependent amination of UTP to CTP with either L-glutamine or ammonia as the source of nitrogen. Regulates intracellular CTP levels through interactions with the four ribonucleotide triphosphates. This chain is CTP synthase, found in Psychromonas ingrahamii (strain DSM 17664 / CCUG 51855 / 37).